A 950-amino-acid polypeptide reads, in one-letter code: F-box only protein 10 (950 aa).

Residues 1–48 (METGGLPLELWRMILAYLHLPDLGRCSLVCRAWYELILSLDSTRWRQL) form the F-box domain. PbH1 repeat units lie at residues 198–217 (SGHI…QVHG) and 238–260 (VPLC…TVEG). The tract at residues 313–364 (IEGSQSPTSPVCSSPKPGSKEAEVGSDGERVAQTPDSSDGGLSPSGEDEDDE) is disordered. The segment covering 315-324 (GSQSPTSPVC) has biased composition (polar residues). A phosphoserine mark is found at serine 321 and serine 326. The segment covering 330–342 (GSKEAEVGSDGER) has biased composition (basic and acidic residues). Residues 347–357 (PDSSDGGLSPS) show a composition bias toward low complexity. PbH1 repeat units follow at residues 423–444 (VQGC…FVCS), 467–489 (NSKI…FLRL), 490–512 (EGGG…DIRK), 513–535 (KSNP…VVLG), 536–558 (NGKG…YILY), 559–581 (HGNP…AVNE), 582–604 (NGKG…DIRR), 605–627 (GGVP…VVGD), 628–650 (EGKG…WMMS), 651–673 (SSLP…AVFS), 713–735 (ITVA…FVQS), 736–758 (SEAL…TIVQ), 760–782 (SQLT…KVEF), 783–805 (QCKV…ITKG), and 828–850 (RSDT…AVRG).

As to quaternary structure, component of the SCF(FBXO10) complex consisting of CUL1, SKP1 and FBXO10. Interacts with BCL2. Interacts with PRDM1. As to expression, particularly highly expressed in B-cells.

The protein localises to the cytoplasm. It participates in protein modification; protein ubiquitination. Substrate-recognition component of the SCF (SKP1-CUL1-F-box protein)-type E3 ubiquitin ligase complex. Mediates the ubiquitination and degradation of BCL2, an antiapoptotic protein, thereby playing a role in apoptosis by controlling the stability of BCL2. Targets also the receptor for advanced glycation end products RAGE for ubiquitination and subsequent lysosomal degradation. Directly controls HGAL/GCSAM ubiquitination and degradation and thereby decreases BCR signaling. This is F-box only protein 10 (Fbxo10) from Mus musculus (Mouse).